The primary structure comprises 294 residues: Nucleotide-binding protein Swol_0262 (294 aa).

An ATP-binding site is contributed by 15 to 22; the sequence is GLSGAGKT. 65–68 contributes to the GTP binding site; it reads DVRG.

The protein belongs to the RapZ-like family.

Its function is as follows. Displays ATPase and GTPase activities. The polypeptide is Nucleotide-binding protein Swol_0262 (Syntrophomonas wolfei subsp. wolfei (strain DSM 2245B / Goettingen)).